The chain runs to 239 residues: Ribose-5-phosphate isomerase A (239 aa).

Substrate-binding positions include 40–43 (SGST), 96–99 (DGAD), and 110–113 (KGGG). Residue Glu119 is the Proton acceptor of the active site. Lys137 provides a ligand contact to substrate.

It belongs to the ribose 5-phosphate isomerase family. Homodimer.

The catalysed reaction is aldehydo-D-ribose 5-phosphate = D-ribulose 5-phosphate. It participates in carbohydrate degradation; pentose phosphate pathway; D-ribose 5-phosphate from D-ribulose 5-phosphate (non-oxidative stage): step 1/1. Catalyzes the reversible conversion of ribose-5-phosphate to ribulose 5-phosphate. The sequence is that of Ribose-5-phosphate isomerase A from Methanococcus vannielii (strain ATCC 35089 / DSM 1224 / JCM 13029 / OCM 148 / SB).